We begin with the raw amino-acid sequence, 1319 residues long: DNA (cytosine-5)-methyltransferase CMT2 (1319 aa).

Over residues 1–15 the composition is skewed to pro residues; sequence METPPPDPVSPPPPA. Disordered regions lie at residues 1 to 34, 142 to 189, 265 to 302, and 442 to 468; these read METPPPDPVSPPPPAADEGSPGGDDGAEDAGGFS, ALDS…VASS, SAASSMPLNQNGDSSRASKRRVADSRKSRSSEGSKLPA, and KSRVVSKTPQGRGRRSPQPPKTQRART. Residues 266 to 279 show a composition bias toward polar residues; sequence AASSMPLNQNGDSS. Residues 285 to 296 are compositionally biased toward basic and acidic residues; it reads RVADSRKSRSSE. The region spanning 602–719 is the BAH domain; sequence YTFCIGECAF…IDYSTFSTIE (118 aa). Residues 758–1296 enclose the SAM-dependent MTase C5-type domain; the sequence is LSLLDLYCGC…YALAMAYLKK (539 aa). The Chromo domain maps to 863–928; the sequence is FEVWKLVDIC…EGHRQRILPR (66 aa). The active site involves C941.

It is found in the nucleus. It catalyses the reaction a 2'-deoxycytidine in DNA + S-adenosyl-L-methionine = a 5-methyl-2'-deoxycytidine in DNA + S-adenosyl-L-homocysteine + H(+). Its function is as follows. Involved in CpXpG DNA methylation. This is DNA (cytosine-5)-methyltransferase CMT2 from Oryza sativa subsp. japonica (Rice).